The chain runs to 225 residues: UPF0758 protein BcerKBAB4_4299 (225 aa).

The MPN domain occupies 103 to 225 (SIRSPEDCAS…FVSLKEKGHI (123 aa)). His-174, His-176, and Asp-187 together coordinate Zn(2+). Positions 174-187 (HNHPSGDPAPSRED) match the JAMM motif motif.

This sequence belongs to the UPF0758 family.

The protein is UPF0758 protein BcerKBAB4_4299 of Bacillus mycoides (strain KBAB4) (Bacillus weihenstephanensis).